The sequence spans 439 residues: 3-phosphoshikimate 1-carboxyvinyltransferase (439 aa).

3-phosphoshikimate-binding residues include lysine 29, serine 30, and arginine 34. A phosphoenolpyruvate-binding site is contributed by lysine 29. Phosphoenolpyruvate-binding residues include glycine 100 and arginine 128. 3-phosphoshikimate is bound by residues serine 173, serine 174, glutamine 175, serine 201, aspartate 321, and lysine 348. A phosphoenolpyruvate-binding site is contributed by glutamine 175. The active-site Proton acceptor is the aspartate 321. Residues arginine 352 and arginine 395 each contribute to the phosphoenolpyruvate site.

This sequence belongs to the EPSP synthase family. As to quaternary structure, monomer.

It localises to the cytoplasm. It carries out the reaction 3-phosphoshikimate + phosphoenolpyruvate = 5-O-(1-carboxyvinyl)-3-phosphoshikimate + phosphate. Its pathway is metabolic intermediate biosynthesis; chorismate biosynthesis. Its function is as follows. Catalyzes the transfer of the enolpyruvyl moiety of phosphoenolpyruvate (PEP) to the 5-hydroxyl of shikimate-3-phosphate (S3P) to produce enolpyruvyl shikimate-3-phosphate and inorganic phosphate. In Halobacterium salinarum (strain ATCC 700922 / JCM 11081 / NRC-1) (Halobacterium halobium), this protein is 3-phosphoshikimate 1-carboxyvinyltransferase.